The chain runs to 117 residues: Anti-sigma F factor antagonist (117 aa).

The STAS domain occupies 3–113; it reads LQIEMEHHRG…DNEVNALTEL (111 aa). Ser58 bears the Phosphoserine mark.

Belongs to the anti-sigma-factor antagonist family. Phosphorylated by SpoIIAB on a serine residue.

Its function is as follows. In the phosphorylated form it could act as an anti-anti-sigma factor that counteracts SpoIIAB and thus releases sigma f from inhibition. This chain is Anti-sigma F factor antagonist (spoIIAA), found in Paenibacillus polymyxa (Bacillus polymyxa).